The primary structure comprises 475 residues: Sulfate adenylyltransferase subunit 1 (475 aa).

Residues 25–239 enclose the tr-type G domain; it reads KSLLRFLTCG…EVLETVEIQR (215 aa). Positions 34–41 are G1; it reads GSVDDGKS. 34-41 serves as a coordination point for GTP; it reads GSVDDGKS. Residues 92-96 are G2; the sequence is GITID. The interval 113 to 116 is G3; it reads DTPG. GTP contacts are provided by residues 113-117 and 168-171; these read DTPGH and NKMD. The interval 168–171 is G4; that stretch reads NKMD. The interval 206–208 is G5; the sequence is SAL.

Belongs to the TRAFAC class translation factor GTPase superfamily. Classic translation factor GTPase family. CysN/NodQ subfamily. Heterodimer composed of CysD, the smaller subunit, and CysN.

The catalysed reaction is sulfate + ATP + H(+) = adenosine 5'-phosphosulfate + diphosphate. It participates in sulfur metabolism; hydrogen sulfide biosynthesis; sulfite from sulfate: step 1/3. In terms of biological role, with CysD forms the ATP sulfurylase (ATPS) that catalyzes the adenylation of sulfate producing adenosine 5'-phosphosulfate (APS) and diphosphate, the first enzymatic step in sulfur assimilation pathway. APS synthesis involves the formation of a high-energy phosphoric-sulfuric acid anhydride bond driven by GTP hydrolysis by CysN coupled to ATP hydrolysis by CysD. In Escherichia coli O127:H6 (strain E2348/69 / EPEC), this protein is Sulfate adenylyltransferase subunit 1.